The chain runs to 709 residues: MSKMRVYEYAKKQNVPSKDVIHKLKEMNIEVNNHMAMLEADVVEKLDHQYRPNTGKKEEKKAEKKTEKPKRPTPAKAADFADEEIFDDSKEAAKMKPAKKKGAPKGKETKKTEAQQQEKKLLQAAKKKGKGPAKGKKQAAPAAKQAPQPAKKEKELPKKITFEGSLTVAELAKKLGREPSEIIKKLFMLGVMATINQDLDKDAIELICSDYGVEVEEKVTIDETNFEAIEIVDAPEDLVERPPVVTIMGHVDHGKTTLLDAIRHSKVTEQEAGGITQHIGAYQVTVNDKKITFLDTPGHEAFTTMRARGAQVTDIVILVVAADDGVMPQTVEAINHAKAANVPIIVAINKIDKPEANPDRVMQELMEYNLVPEEWGGDTIFCKLSAKTKEGLDHLLEMILLVSEMEELKANPNRRAVGTVIEAKLDKGRGPVATLLIQAGTLRVGDPIVVGTTYGRVRAMVNDSGRRVKEATPSMPVEITGLHEVPQAGDRFMVFEDEKKARQIAEARAQRQLQEQRSVKTRVSLDDLFEQIKQGEMKELNLIVKADVQGSVEALVAALQKIDVEGVRVKIIHAAVGAITESDISLATASNAIVIGFNVRPDANAKRAAESEKVDIRLHRIIYNVIEEIEAAMKGMLDPEYEEKVIGQAEVRQTFKVSKVGTIAGCYVTDGKITRDSKVRLIRQGIVVYEGEIDSLKRYKAIAPNGARV.

Basic and acidic residues-rich tracts occupy residues Asp47–Lys70 and Lys105–Leu121. A disordered region spans residues Asp47–Pro157. Over residues Ala125 to Lys137 the composition is skewed to basic residues. Residues Gln138–Pro149 are compositionally biased toward low complexity. In terms of domain architecture, tr-type G spans Glu240 to Lys409. Residues Gly249–Thr256 are G1. Gly249–Thr256 is a binding site for GTP. The G2 stretch occupies residues Gly274–His278. The segment at Asp295–Gly298 is G3. GTP contacts are provided by residues Asp295–His299 and Asn349–Asp352. The G4 stretch occupies residues Asn349–Asp352. A G5 region spans residues Ser385–Lys387.

This sequence belongs to the TRAFAC class translation factor GTPase superfamily. Classic translation factor GTPase family. IF-2 subfamily.

The protein resides in the cytoplasm. One of the essential components for the initiation of protein synthesis. Protects formylmethionyl-tRNA from spontaneous hydrolysis and promotes its binding to the 30S ribosomal subunits. Also involved in the hydrolysis of GTP during the formation of the 70S ribosomal complex. In Geobacillus kaustophilus (strain HTA426), this protein is Translation initiation factor IF-2.